The primary structure comprises 212 residues: Thaumatin-like protein 1b (212 aa).

Intrachain disulfides connect Cys47–Cys57, Cys62–Cys69, Cys117–Cys200, Cys122–Cys183, Cys130–Cys146, Cys150–Cys159, and Cys160–Cys170.

This sequence belongs to the thaumatin family.

It localises to the secreted. The chain is Thaumatin-like protein 1b from Malus domestica (Apple).